Consider the following 277-residue polypeptide: Formamidopyrimidine-DNA glycosylase (277 aa).

The active-site Schiff-base intermediate with DNA is P2. The active-site Proton donor is E3. The Proton donor; for beta-elimination activity role is filled by K60. DNA is bound by residues H94, R113, and R158. The FPG-type zinc-finger motif lies at 243 to 277 (WVYNRAGEPCKVCGDVIQRIKLGGRSSHFCRQCQV). The active-site Proton donor; for delta-elimination activity is R267.

This sequence belongs to the FPG family. As to quaternary structure, monomer. It depends on Zn(2+) as a cofactor.

It carries out the reaction Hydrolysis of DNA containing ring-opened 7-methylguanine residues, releasing 2,6-diamino-4-hydroxy-5-(N-methyl)formamidopyrimidine.. The enzyme catalyses 2'-deoxyribonucleotide-(2'-deoxyribose 5'-phosphate)-2'-deoxyribonucleotide-DNA = a 3'-end 2'-deoxyribonucleotide-(2,3-dehydro-2,3-deoxyribose 5'-phosphate)-DNA + a 5'-end 5'-phospho-2'-deoxyribonucleoside-DNA + H(+). Functionally, involved in base excision repair of DNA damaged by oxidation or by mutagenic agents. Acts as a DNA glycosylase that recognizes and removes damaged bases. Has a preference for oxidized purines, such as 7,8-dihydro-8-oxoguanine (8-oxoG). Has AP (apurinic/apyrimidinic) lyase activity and introduces nicks in the DNA strand. Cleaves the DNA backbone by beta-delta elimination to generate a single-strand break at the site of the removed base with both 3'- and 5'-phosphates. The polypeptide is Formamidopyrimidine-DNA glycosylase (Trichormus variabilis (strain ATCC 29413 / PCC 7937) (Anabaena variabilis)).